The following is a 275-amino-acid chain: 2,3,4,5-tetrahydropyridine-2,6-dicarboxylate N-succinyltransferase (275 aa).

Residues R106 and D143 each contribute to the substrate site.

Belongs to the transferase hexapeptide repeat family. In terms of assembly, homotrimer.

It localises to the cytoplasm. It carries out the reaction (S)-2,3,4,5-tetrahydrodipicolinate + succinyl-CoA + H2O = (S)-2-succinylamino-6-oxoheptanedioate + CoA. Its pathway is amino-acid biosynthesis; L-lysine biosynthesis via DAP pathway; LL-2,6-diaminopimelate from (S)-tetrahydrodipicolinate (succinylase route): step 1/3. This chain is 2,3,4,5-tetrahydropyridine-2,6-dicarboxylate N-succinyltransferase, found in Ralstonia nicotianae (strain ATCC BAA-1114 / GMI1000) (Ralstonia solanacearum).